Reading from the N-terminus, the 85-residue chain is Conotoxin Lt28.2 (85 aa).

The first 21 residues, 1–21 (MPKLEMMLLVLLILPLCYIDA), serve as a signal peptide directing secretion. The propeptide occupies 22–40 (VGPPPPWNMEDEIIEHWQK).

Belongs to the conotoxin D superfamily. Post-translationally, contains 5 disulfide bonds. In terms of tissue distribution, expressed by the venom duct.

It localises to the secreted. Probable neurotoxin. The polypeptide is Conotoxin Lt28.2 (Conus litteratus (Lettered cone)).